The following is a 399-amino-acid chain: Transcription factor UNE10 (399 aa).

Disordered stretches follow at residues 119–158 (QSKP…GSQR) and 173–228 (MGSH…RRDK). The segment covering 178 to 201 (NTIDDHDSVCHSRPQMEDEEEKKA) has biased composition (basic and acidic residues). A bHLH domain is found at 213-262 (RAAAIHNQSERKRRDKINQRMKTLQKLVPNSSKTDKASMLDEVIEYLKQL).

Homodimer. Associates to PTAC12/HMR/PAP5 which acts as a transcriptional coactivator. Interacts with the Pfr form of phyB but barely with that of phyA. Binds to COP1. Post-translationally, ubiquitinated and subsequently targeted to protein degradation by COP1 in the dark, but not in far-red light. In terms of tissue distribution, mainly expressed in stems, leaves, seedlings, fruits and flowers, and, to a lower extent, in roots.

It localises to the nucleus. Stabilized by phyA but destabilized by phyB. Accumulates in the dark but not in far-red light upon MG132 treatment, a 26S proteasome inhibitor (at protein level). Transcription factor binding to G-box elements (5'-CACGTG-3') in target genes promoters, particularly in far-red light but barely in the dark. Required during the fertilization of ovules by pollen. Repressor of phytochrome A-mediated far-red light responses including seed germination, suppression of hypocotyl elongation, and randomization of hypocotyl growth orientation. Does not inhibit phyB-induced red light responses. The sequence is that of Transcription factor UNE10 from Arabidopsis thaliana (Mouse-ear cress).